Here is a 349-residue protein sequence, read N- to C-terminus: Anthranilate phosphoribosyltransferase (349 aa).

5-phospho-alpha-D-ribose 1-diphosphate-binding positions include Gly82, 85–86, 92–95, 110–118, and Ser122; these read GD, NVST, and KHGNRGVSS. Residue Gly82 coordinates anthranilate. Ser94 lines the Mg(2+) pocket. Anthranilate is bound at residue Asn113. Position 168 (Arg168) interacts with anthranilate. Asp227 and Glu228 together coordinate Mg(2+).

This sequence belongs to the anthranilate phosphoribosyltransferase family. As to quaternary structure, homodimer. Requires Mg(2+) as cofactor.

The enzyme catalyses N-(5-phospho-beta-D-ribosyl)anthranilate + diphosphate = 5-phospho-alpha-D-ribose 1-diphosphate + anthranilate. Its pathway is amino-acid biosynthesis; L-tryptophan biosynthesis; L-tryptophan from chorismate: step 2/5. Catalyzes the transfer of the phosphoribosyl group of 5-phosphorylribose-1-pyrophosphate (PRPP) to anthranilate to yield N-(5'-phosphoribosyl)-anthranilate (PRA). The polypeptide is Anthranilate phosphoribosyltransferase (Acinetobacter baumannii (strain SDF)).